Reading from the N-terminus, the 200-residue chain is Large ribosomal subunit protein uL4 (200 aa).

A disordered region spans residues 42-65; sequence TRAQKTRSDVSGGGAKPWRQKGTG.

The protein belongs to the universal ribosomal protein uL4 family. In terms of assembly, part of the 50S ribosomal subunit.

Functionally, one of the primary rRNA binding proteins, this protein initially binds near the 5'-end of the 23S rRNA. It is important during the early stages of 50S assembly. It makes multiple contacts with different domains of the 23S rRNA in the assembled 50S subunit and ribosome. Its function is as follows. Forms part of the polypeptide exit tunnel. This Photobacterium profundum (strain SS9) protein is Large ribosomal subunit protein uL4.